Consider the following 598-residue polypeptide: Aspartate--tRNA(Asp/Asn) ligase (598 aa).

Glu-174 provides a ligand contact to L-aspartate. An aspartate region spans residues 198-201 (QQLK). An L-aspartate-binding site is contributed by Arg-220. Residues 220–222 (RDE) and Gln-229 contribute to the ATP site. His-458 provides a ligand contact to L-aspartate. Residue Glu-492 coordinates ATP. Arg-499 is an L-aspartate binding site. 544–547 (GIDR) contributes to the ATP binding site.

This sequence belongs to the class-II aminoacyl-tRNA synthetase family. Type 1 subfamily. In terms of assembly, homodimer.

The protein localises to the cytoplasm. It catalyses the reaction tRNA(Asx) + L-aspartate + ATP = L-aspartyl-tRNA(Asx) + AMP + diphosphate. In terms of biological role, aspartyl-tRNA synthetase with relaxed tRNA specificity since it is able to aspartylate not only its cognate tRNA(Asp) but also tRNA(Asn). Reaction proceeds in two steps: L-aspartate is first activated by ATP to form Asp-AMP and then transferred to the acceptor end of tRNA(Asp/Asn). In Dehalococcoides mccartyi (strain ATCC BAA-2100 / JCM 16839 / KCTC 5957 / BAV1), this protein is Aspartate--tRNA(Asp/Asn) ligase.